The primary structure comprises 2297 residues: Serine/threonine-protein kinase WNK2 (2297 aa).

Basic and acidic residues predominate over residues 1–10 (MDGDGGRRDV). Disordered regions lie at residues 1 to 75 (MDGD…QRRV) and 89 to 183 (ARGR…EDDL). 2 positions are modified to omega-N-methylarginine: arginine 19 and arginine 30. Serine 45 bears the Phosphoserine mark. Residues 92-120 (RPAAPAPAALVAQPGAPGAPADAGPEPVG) are compositionally biased toward low complexity. Positions 142 to 172 (GPREEAAATVRKEDEGAAEAKPEPGRTRRDE) are enriched in basic and acidic residues. The span at 173–182 (PEEEEDDEDD) shows a compositional bias: acidic residues. In terms of domain architecture, Protein kinase spans 195-453 (LKFDIELGRG…IKDLLSHAFF (259 aa)). ATP is bound by residues serine 205, 275-278 (TELM), and lysine 325. The active-site Proton acceptor is the aspartate 342. A phosphoserine; by autocatalysis mark is found at serine 352 and serine 356. At serine 560 the chain carries Phosphoserine. 8 disordered regions span residues 579-630 (AQAG…DSQS), 699-751 (FPDP…PVVP), 917-1022 (PQMA…PGSQ), 1117-1185 (PVQE…ERAS), 1262-1297 (SEDT…SQAN), 1323-1345 (APEA…ASQG), 1374-1480 (SAQS…HEAP), and 1492-1586 (PCTP…DSTI). The span at 604–625 (PTSATSLASDSTFDSGQGSTVY) shows a compositional bias: polar residues. Pro residues-rich tracts occupy residues 709–740 (VLPP…PTPL) and 939–1007 (PPQP…PLQP). Serine 1150 is modified (phosphoserine). The span at 1167–1178 (ARKHHRRSTRAR) shows a compositional bias: basic residues. Serine 1262 is modified (phosphoserine). The segment covering 1392–1406 (SKEQPSFLASQQLLS) has biased composition (polar residues). Pro residues predominate over residues 1411 to 1426 (SNPPGAPPAPLAPSSP). 2 stretches are compositionally biased toward polar residues: residues 1439–1453 (ATST…TASQ) and 1461–1473 (QGLT…SQPL). Residues 1510–1520 (EPLPPPAPEPS) are compositionally biased toward pro residues. Positions 1526 to 1544 (PQPALGQPAPLLPAAVGAV) are enriched in low complexity. A compositionally biased stretch (pro residues) spans 1552–1565 (PSPPLGPTVPPQPP). The residue at position 1588 (serine 1588) is a Phosphoserine. Residues 1621–1631 (TLEPLRGDQPR) show a composition bias toward basic and acidic residues. Positions 1621-1865 (TLEPLRGDQP…PVQKQASLPV (245 aa)) are disordered. Positions 1675–1688 (QGTSSSMTAESSPR) are enriched in polar residues. Phosphoserine is present on serine 1685. A compositionally biased stretch (basic and acidic residues) spans 1721 to 1731 (ARVEPTDRDGG). Phosphoserine is present on residues serine 1736, serine 1817, serine 1818, serine 1862, and serine 1889. 2 disordered regions span residues 1970–1990 (NVGF…SKSK) and 2011–2031 (TGHL…QASV). Over residues 1981–1990 (GRRRKTSKSK) the composition is skewed to basic residues. Serine 2067 is subject to Phosphoserine. Disordered stretches follow at residues 2123–2142 (SRSS…QPAL) and 2269–2297 (CCGH…PVRS). Residues 2272 to 2289 (HSTQPRGGQRVGSKTASF) show a composition bias toward polar residues.

It belongs to the protein kinase superfamily. Ser/Thr protein kinase family. WNK subfamily. As to quaternary structure, forms a complex with the phosphorylated form of STK39. Mg(2+) is required as a cofactor. Post-translationally, autophosphorylated. Autophosphorylation at Ser-352 and Ser-356 promotes its activity. As to expression, expressed in various cancer cell lines (at protein level). Predominantly expressed in heart, brain, skeletal muscle and colon.

Its subcellular location is the cytoplasm. The protein resides in the cell membrane. It carries out the reaction L-seryl-[protein] + ATP = O-phospho-L-seryl-[protein] + ADP + H(+). It catalyses the reaction L-threonyl-[protein] + ATP = O-phospho-L-threonyl-[protein] + ADP + H(+). Activation requires autophosphorylation of Ser-356 and, to a lower extent, Ser-352. Functionally, serine/threonine-protein kinase component of the WNK2-SPAK/OSR1 kinase cascade, which plays an important role in the regulation of electrolyte homeostasis, cell signaling, survival, and proliferation. The WNK2-SPAK/OSR1 kinase cascade is composed of WNK2, which mediates phosphorylation and activation of downstream kinases OXSR1/OSR1 and STK39/SPAK. Following activation, OXSR1/OSR1 and STK39/SPAK catalyze phosphorylation of ion cotransporters, regulating their activity. Acts as an activator and inhibitor of sodium-coupled chloride cotransporters and potassium-coupled chloride cotransporters respectively. Activates SLC12A2, SCNN1A, SCNN1B, SCNN1D and SGK1 and inhibits SLC12A5. Negatively regulates the EGF-induced activation of the ERK/MAPK-pathway and the downstream cell cycle progression. Affects MAPK3/MAPK1 activity by modulating the activity of MAP2K1 and this modulation depends on phosphorylation of MAP2K1 by PAK1. WNK2 acts by interfering with the activity of PAK1 by controlling the balance of the activity of upstream regulators of PAK1 activity, RHOA and RAC1, which display reciprocal activity. The sequence is that of Serine/threonine-protein kinase WNK2 from Homo sapiens (Human).